A 940-amino-acid chain; its full sequence is Chromatin assembly factor 1 subunit FSM (940 aa).

Disordered regions lie at residues 317–473, 638–682, and 919–940; these read NVDD…DPCT, VDSD…FFVP, and KTTQ…PSSQ. Positions 320–329 are enriched in polar residues; it reads DSQLQKNTST. Residues 329–439 are a coiled coil; the sequence is TNEKDTQKAQ…LKKQLAIQKQ (111 aa). Positions 330–429 are enriched in basic and acidic residues; the sequence is NEKDTQKAQK…QKRREKEAVQ (100 aa). The segment covering 430–440 has biased composition (low complexity); the sequence is LKKQLAIQKQA. The segment covering 445–461 has biased composition (basic and acidic residues); it reads RFFKNKKDSEKLEKPGG. Residues 638–650 show a composition bias toward acidic residues; it reads VDSDDEWEEEDPG.

It belongs to the CHAF1A family. In terms of assembly, component of the chromatin assembly factor 1 (CAF-1) complex, composed of FSM (FAS1), FAS2 and MSI1. As to expression, in embryo, expressed in leaf primordia, coleoptile and radicle. In seedlings, expressed in cell division zone of roots, SAM and leaf primordia. Expressed in floral organ primordia.

The protein localises to the nucleus. In terms of biological role, component of the chromatin assembly factor complex (CAF-1) involved in chromatin assembly following DNA replication and DNA repair. Required for several aspects of development, including apical meristem maintenance by regulating the durations of the S- and G2-phases of the cell cycle through its chromatin assembly activity. This chain is Chromatin assembly factor 1 subunit FSM (FSM), found in Oryza sativa subsp. japonica (Rice).